A 335-amino-acid chain; its full sequence is MAKRYLLDFEKPLVELEKQIEQIKELARDSEVDVSQQLLQLETLAARRREEIFKSLTPAQKIQVARHPQRPSTLDFVQMFCDDWIELHGDRNGGDDMALVGGIGSINNRPVLILGHQKGRDTKENVVRNFGMAKPGGYRKALRLMQHADRFSLPILTFIDTPGAYAGLTAEEQGQGEAIARNLREMFGLKVPIVATVIGEGGSGGALGIGVADRLLMFEHSVYTVASPEACASILWRDAAKAPEAASALKITGKDLLKLGIIDEVLPEPSGGNNWAPLDAGNTLKEAIEKHLNALLQMTKDELIEERYKKFRVLGKFIEANNIEEIYSEIPQKTE.

The 255-residue stretch at 40–294 folds into the CoA carboxyltransferase C-terminal domain; the sequence is QLETLAARRR…KEAIEKHLNA (255 aa).

Belongs to the AccA family. Acetyl-CoA carboxylase is a heterohexamer composed of biotin carboxyl carrier protein (AccB), biotin carboxylase (AccC) and two subunits each of ACCase subunit alpha (AccA) and ACCase subunit beta (AccD).

The protein localises to the cytoplasm. The catalysed reaction is N(6)-carboxybiotinyl-L-lysyl-[protein] + acetyl-CoA = N(6)-biotinyl-L-lysyl-[protein] + malonyl-CoA. The protein operates within lipid metabolism; malonyl-CoA biosynthesis; malonyl-CoA from acetyl-CoA: step 1/1. Functionally, component of the acetyl coenzyme A carboxylase (ACC) complex. First, biotin carboxylase catalyzes the carboxylation of biotin on its carrier protein (BCCP) and then the CO(2) group is transferred by the carboxyltransferase to acetyl-CoA to form malonyl-CoA. The polypeptide is Acetyl-coenzyme A carboxylase carboxyl transferase subunit alpha (Prochlorococcus marinus (strain MIT 9215)).